The primary structure comprises 299 residues: MAERTYRINIAAELAGVRVELIRAWERRYGVLTPRRTPAGYRAYTDRDVAVLKQLKRLTDEGVAISEAAKLLPQLMEGLEAEVAGRGASQDARPHAETWRESMLAATQAYDQPRVSDVLDEVLAALPPLKAFDEVLAPLLCDVGERWESGTLTVAQEHLVSQMVRARLVSLLHAAPLGRHRHGVLACFPEEEHEMGLLGAALRLRHLGVRVTLLGQRVPAEDLGRAVLALRPDFVGLSTVASRSAEDFEDTLTRLRQALPRGLPVWVGGAAARSHQAVCERLAVHVFQGEEDWDRLAGT.

Residues 5–74 (TYRINIAAEL…ISEAAKLLPQ (70 aa)) form the HTH merR-type domain. The H-T-H motif DNA-binding region spans 8–27 (INIAAELAGVRVELIRAWER). In terms of domain architecture, B12-binding spans 180–299 (HRHGVLACFP…EEDWDRLAGT (120 aa)).

The protein belongs to the CarA/CarH B12-binding photoregulator family. Forms oligomers. Interacts with CarS.

With respect to regulation, requires cobalamin (vitamin B12) for repressor activity. In the dark, binding of cobalamin to CarH induces its oligomerization, which enhances binding to the DNA and repressor activity. Light causes cobalamin photolysis and disruption of the cobalamin-CarH complex, which decreases interaction with DNA and allows transcription of the carB operon. Interaction with CarS also prevents binding to DNA. In terms of biological role, negative regulator of the carB operon in the dark. Binds specifically to the CarA operator, in the region around the carB promoter, which blocks access to the RNA polymerase. The protein is HTH-type transcriptional repressor CarH (carH) of Myxococcus xanthus.